The primary structure comprises 446 residues: Delta(8)-fatty-acid desaturase (446 aa).

Residues 5–89 (KKYISVGELE…LEDYLVSEIS (85 aa)) form the Cytochrome b5 heme-binding domain. The heme site is built by H40 and H63. The next 2 helical transmembrane spans lie at 112 to 132 (VIYC…GVLC) and 136 to 156 (LWVH…AAYL). Residues 158–162 (HDSGH) carry the Histidine box-1 motif. 4 helical membrane-spanning segments follow: residues 174–195 (FAQV…KWTH), 253–273 (IYLV…LLLF), 282–302 (ALNI…VSCL), and 309–329 (VLFV…FTLN). The Histidine box-2 motif lies at 195–199 (HNAHH). Residues 372-376 (QLEHH) carry the Histidine box-3 motif.

This sequence belongs to the fatty acid desaturase type 1 family. Requires Fe cation as cofactor. In terms of tissue distribution, expressed only in young leaves.

It localises to the membrane. It carries out the reaction an N-acyl-(4R)-4-hydroxysphinganine + 2 Fe(II)-[cytochrome b5] + O2 + 2 H(+) = a (4R,8E)-4-hydroxysphingenine ceramide + 2 Fe(III)-[cytochrome b5] + 2 H2O. It catalyses the reaction an N-acyl-(4R)-4-hydroxysphinganine + 2 Fe(II)-[cytochrome b5] + O2 + 2 H(+) = a (4R,8Z)-4-hydroxysphing-8-enine ceramide + 2 Fe(III)-[cytochrome b5] + 2 H2O. Its function is as follows. Plays a major role as delta(8)-fatty-acid desaturase which introduces a double bond at the 8-position in the long-chain base (LCB) of ceramides with or without a hydroxy group at the 4-position. The enzyme produces both the 8E and 8Z isomers (in a 4:1 ratio). This structural modification contributes to the quantitative partitioning of ceramides between the two major sphingolipid classes, glucosylceramides and glycosylinositolphosphoryl ceramides. Sphingolipids are important membrane components involved in environmental stress responses, such as resistance to chilling, and act as cell signaling molecules. The protein is Delta(8)-fatty-acid desaturase (sld1) of Borago officinalis (Bourrache).